The primary structure comprises 1349 residues: MDTPSSGTIDLEHGEAGLRKRLTLTFRSVSVHVTAPDAALGDTLLSVADPRQFLGFLKGSRPKRTILKDVSGQVKPGEMLLVLGRPGSGCTSLLRVLSNDRESFDEVIGETRYGSMDHVAARRFRQQIMFNNEDDVHFPTLTVNRTMKFALRNKVPRERPDGQGSKEFVQEQRDNILSALGIRHTTKTLVGNEFIRGVSGGERKRVSLAEVIAGQSPIQVWDNPTRGLDSKTAVEFARLLRREADMNQKTMVATMYQAGNGIYNEFDQVLVLADGRVTYYGPRQLAKSYFEDMGFVCPKGANVADFLTSVTVLTERIVRPGMEDKVPSTAEEFEARYRQSDIHQKAMEGFDPPEKLTHEVDELTAAVASEKRKRHLPRSPSVYTTSLWEQIQACTIRQFQIMAGDRLSLIIKVVSAILQALVCGSLFYNLKDDSSSIFLRPGALFFPVLYFLLESMSETTASFMGRPILSRQKRFGFYRPTAFCIANAITDIPVVLVQVSCFCIILYFMAALQMDAGRFFTYWIIVIANTLCFMQMFRAVGALCKRFGNASKITGLLSTIFFVYGGYLIPYEKMHVWFRWIFYLNPGAYAFEALMANEFVGKSLQCVQPDYIPYGSGYPGSESPYRGCSIPGSEGDVILGAAYIRAQYNYSWHHIWRSFGVIIGFWVFFIVLTALGLELLNSQGGSSVLLYKRGSQKTRSEDTTTPVQEAARASHAKQSTFTWHDLDYHVPYQGQKKQLLDKVFGFVKPGNLVALMGCSGAGKTTLLDVLAQRKDSGEIYGSILIDGRPQGISFQRTTGYCEQMDVHEPTATVREALVFSALLRQPAHVPREEKLAYVDHIIDLLELRDISDALIGVPGAGLSIEQRKRVTLGVELVAKPTLLFLDEPTSGLDGQSAYNIIRFLRKLVDGGQAVLCTIHQPSAVLFEAFDSLLLLARGGKMAYFGETGKDSQTVLDYFARHGAPCPPDENPAEHIVEVIQGNTDKPIDWVQVWNESEEKQRALAQLQTLNARGKADADYVEDTADYATSKWFQFTMVTKRLMVQLWRSPDYVWNKVILHVFAALFSGFTFWKIGDGAFDLQLRLFAIFNFIFVAPGCINQMQPFFLHNRDIFEAREKKSKIYHWLAFIGAQTVSEIPYLILCATLYFACWYFTAGFPTTASISGHMYLQMIFYEFLYTSIGQGIAAYAPNEYFAAVMNPVLIGAGLVSFCGVVVPFSQMQPFWRDWLYYLDPFTYLVGGLLGEVLWDVEVRCDPSELVRFRAPLGQTCGEYMAAFLAEKPGYLVDGNATACEFCQYSTGADYARTFNLKERYYSWRDTGITALFCVSSYAMVFLMMKLRSKKTKSARSE.

Positions 51–299 (RQFLGFLKGS…FEDMGFVCPK (249 aa)) constitute an ABC transporter 1 domain. Residue N144 is glycosylated (N-linked (GlcNAc...) asparagine). The next 4 helical transmembrane spans lie at 407–427 (LSLI…GSLF), 436–456 (SIFL…LESM), 492–512 (IPVV…MAAL), and 523–543 (WIIV…VGAL). N549 is a glycosylation site (N-linked (GlcNAc...) asparagine). The next 2 membrane-spanning stretches (helical) occupy residues 550-570 (ASKI…YLIP) and 580-600 (WIFY…NEFV). Residue N649 is glycosylated (N-linked (GlcNAc...) asparagine). A helical membrane pass occupies residues 659–679 (FGVIIGFWVFFIVLTALGLEL). In terms of domain architecture, ABC transporter 2 spans 721–963 (FTWHDLDYHV…VLDYFARHGA (243 aa)). 757-764 (GCSGAGKT) lines the ATP pocket. N-linked (GlcNAc...) asparagine glycosylation is present at N994. Helical transmembrane passes span 1056 to 1076 (VILH…IGDG), 1085 to 1105 (FAIF…QPFF), 1121 to 1143 (IYHW…ILCA), 1166 to 1186 (MYLQ…GIAA), 1193 to 1213 (FAAV…CGVV), and 1226 to 1246 (WLYY…EVLW). The N-linked (GlcNAc...) asparagine glycan is linked to N1287. A helical transmembrane segment spans residues 1318 to 1338 (TGITALFCVSSYAMVFLMMKL).

The protein belongs to the ABC transporter superfamily. ABCG family. PDR (TC 3.A.1.205) subfamily.

It is found in the cell membrane. ABC efflux transporter that seems not to be able to transport azoles, nor rhodamine 6G (R-6G), a known substrate for many ABC transporters. The sequence is that of ABC multidrug transporter G from Aspergillus fumigatus (strain ATCC MYA-4609 / CBS 101355 / FGSC A1100 / Af293) (Neosartorya fumigata).